Consider the following 130-residue polypeptide: Phosphoribosyl-AMP cyclohydrolase (130 aa).

Asp77 contributes to the Mg(2+) binding site. Cys78 contributes to the Zn(2+) binding site. Asp79 and Asp81 together coordinate Mg(2+). Residues Cys95 and Cys102 each contribute to the Zn(2+) site.

This sequence belongs to the PRA-CH family. As to quaternary structure, homodimer. Mg(2+) is required as a cofactor. The cofactor is Zn(2+).

It is found in the cytoplasm. The enzyme catalyses 1-(5-phospho-beta-D-ribosyl)-5'-AMP + H2O = 1-(5-phospho-beta-D-ribosyl)-5-[(5-phospho-beta-D-ribosylamino)methylideneamino]imidazole-4-carboxamide. It functions in the pathway amino-acid biosynthesis; L-histidine biosynthesis; L-histidine from 5-phospho-alpha-D-ribose 1-diphosphate: step 3/9. In terms of biological role, catalyzes the hydrolysis of the adenine ring of phosphoribosyl-AMP. In Pseudomonas syringae pv. tomato (strain ATCC BAA-871 / DC3000), this protein is Phosphoribosyl-AMP cyclohydrolase.